A 427-amino-acid polypeptide reads, in one-letter code: MGDSGDPFLRNPNAAVQARAKVQNRANVLQLKLMGQSHPTGLTNNLLKLFEPRPPLEYKPPPEKRKCPPYTGMAQFVSNFAEPGDPEYAPPKPEVELPSQKRERIHKLRLEKGVEKAAEDLKKYDPNNDPNATGDPYKTLFVSRLNYESSESKIKREFESYGPIKRVHLVTDQLTNKPKGYAFIEYMHTRDMKAAYKQADGQKIDGRRVLVDVERGRTVPNWRPRRLGGGLGTSRVGGGEEIVGEQQPQGRTSQSEEPSRPREEREKSREKGKERERSRELSHEQPRERSRDRPREDKHHRDRDQGGRDRDRDSRRDRDRTRDRGDRDRRDRDRGRDRTSRDHDRDRSRKKERDYEGGEYEHEGGGRSRERDAEYRGEPEETRGYYEDDQGDTDRYSHRYDKMEEDDFRYEREYKRSKRSESREYVR.

Disordered stretches follow at residues 82 to 102 and 215 to 427; these read EPGD…SQKR and RGRT…EYVR. A compositionally biased stretch (basic and acidic residues) spans 93–102; that stretch reads PEVELPSQKR. The region spanning 138–216 is the RRM domain; that stretch reads KTLFVSRLNY…RRVLVDVERG (79 aa). Gly residues predominate over residues 227 to 241; sequence LGGGLGTSRVGGGEE. Basic and acidic residues-rich tracts occupy residues 257–402 and 409–427; these read EPSR…RYDK and RYER…EYVR. Serine 282 is subject to Phosphoserine.

As to quaternary structure, component of the spliceosome. Interacts with CYP63, U2AF35A, U2AF35B, SRZ21, RSZ22, SR34, SR45, SR45A and SCL33. Post-translationally, phosphorylated. The association and dissociation with SR45 is not affected by the phosphorylation status. Ubiquitous.

Its subcellular location is the nucleus speckle. It localises to the nucleus. It is found in the nucleoplasm. Mediates the splicing of pre-mRNA by binding to the loop I region of U1-snRNA. In Arabidopsis thaliana (Mouse-ear cress), this protein is U1 small nuclear ribonucleoprotein 70 kDa (RNU1).